The chain runs to 189 residues: Probable nicotinate-nucleotide adenylyltransferase (189 aa).

It belongs to the NadD family.

The enzyme catalyses nicotinate beta-D-ribonucleotide + ATP + H(+) = deamido-NAD(+) + diphosphate. Its pathway is cofactor biosynthesis; NAD(+) biosynthesis; deamido-NAD(+) from nicotinate D-ribonucleotide: step 1/1. Functionally, catalyzes the reversible adenylation of nicotinate mononucleotide (NaMN) to nicotinic acid adenine dinucleotide (NaAD). The protein is Probable nicotinate-nucleotide adenylyltransferase of Bacillus cereus (strain ATCC 10987 / NRS 248).